The sequence spans 453 residues: Homogentisate 1,2-dioxygenase (453 aa).

The segment at 1–42 (MLEKAEKQRRAGSGQQRAAGYMPGFGNDFETESLPGALPQGQ) is disordered. The active-site Proton acceptor is H306. 2 residues coordinate Fe cation: H349 and E355. Homogentisate contacts are provided by Y364 and H385. H385 provides a ligand contact to Fe cation.

This sequence belongs to the homogentisate dioxygenase family. As to quaternary structure, hexamer; dimer of trimers. Fe cation is required as a cofactor.

The catalysed reaction is homogentisate + O2 = 4-maleylacetoacetate + H(+). The protein operates within amino-acid degradation; L-phenylalanine degradation; acetoacetate and fumarate from L-phenylalanine: step 4/6. Involved in the catabolism of homogentisate (2,5-dihydroxyphenylacetate or 2,5-OH-PhAc), a central intermediate in the degradation of phenylalanine and tyrosine. Catalyzes the oxidative ring cleavage of the aromatic ring of homogentisate to yield maleylacetoacetate. This is Homogentisate 1,2-dioxygenase from Rhizobium meliloti (strain 1021) (Ensifer meliloti).